Consider the following 582-residue polypeptide: MKKNTVLAVVLSMLVFGGWLYIQQKYFPTEYNVPQKPVAQAQGQNPTSSEIAVQTSSNQISNSMIEAVADSDYPSREQTYVIETDIIRAVFTNKGGDIISYKLKEHASAGSDERVEMIENVTERNRALSLALGGHDAQAVDLLFNVKEESLSDGRKQIGFYRDIKLKNTDGSETVFTLAKRYTFIPGDYMFTLEVTIDGKEGMRGLSFGDSAYTLRSAPQIGPEWDKVNDKYEYRALSYFANEKKKEDRSITDGKTKAVNDLASWVSVSGKYFSFIIIPKDPIQKMFFSGIKEEGAKLHNSQFFISRQPIVGNAAYDQYRVYIGPSSEKILNSYNSAAANNYGYENLRIDSLAASSGFLAPLERVLKFVMEIFYKIIPNWGVALLLLTLLMRIIFFPLTKKSSEATKRMQELQPQINELQQKYKNNPQKLNAEMVKFYKEAGYNPASGCLPLLIQLPFLFAMFGLFNNYFEFRGASFIPGWIPDLSVGDSILKFGFTIPFLNWTDLRLLPIIYTASQLLHGKLTQTPGQSQQNPSMKIMIYFMPLFFFFLFYNAPSGLLLFWTFSNILMLLQQLIINKSMKK.

The next 4 membrane-spanning stretches (helical) occupy residues 4–24 (NTVL…YIQQ), 376–396 (IIPN…IIFF), 446–466 (ASGC…FGLF), and 542–562 (FMPL…LLFW).

It belongs to the OXA1/ALB3/YidC family. Type 1 subfamily. As to quaternary structure, interacts with the Sec translocase complex via SecD. Specifically interacts with transmembrane segments of nascent integral membrane proteins during membrane integration.

The protein resides in the cell inner membrane. Its function is as follows. Required for the insertion and/or proper folding and/or complex formation of integral membrane proteins into the membrane. Involved in integration of membrane proteins that insert both dependently and independently of the Sec translocase complex, as well as at least some lipoproteins. Aids folding of multispanning membrane proteins. The sequence is that of Membrane protein insertase YidC from Treponema denticola (strain ATCC 35405 / DSM 14222 / CIP 103919 / JCM 8153 / KCTC 15104).